Consider the following 178-residue polypeptide: Ras-like protein (178 aa).

A GTP-binding site is contributed by 1–6; the sequence is GGVGKS. The short motif at 21–29 is the Effector region element; that stretch reads YDPTIEDSY. Residues 46–50 and 105–108 each bind GTP; these read DTAGQ and NKCD. Cysteine 175 is modified (cysteine methyl ester). The S-geranylgeranyl cysteine moiety is linked to residue cysteine 175. The propeptide at 176–178 is removed in mature form; sequence SIL.

This sequence belongs to the small GTPase superfamily. Ras family.

The protein resides in the cell membrane. It carries out the reaction GTP + H2O = GDP + phosphate + H(+). Its activity is regulated as follows. Alternates between an inactive form bound to GDP and an active form bound to GTP. Activated by a guanine nucleotide-exchange factor (GEF) and inactivated by a GTPase-activating protein (GAP). Its function is as follows. Ras proteins bind GDP/GTP and possess intrinsic GTPase activity. The chain is Ras-like protein from Artemia salina (Brine shrimp).